A 313-amino-acid chain; its full sequence is 4-diphosphocytidyl-2-C-methyl-D-erythritol kinase (313 aa).

Residue K11 is part of the active site. 99 to 109 (PVAAGLAGGST) provides a ligand contact to ATP. Residue D141 is part of the active site.

This sequence belongs to the GHMP kinase family. IspE subfamily.

The enzyme catalyses 4-CDP-2-C-methyl-D-erythritol + ATP = 4-CDP-2-C-methyl-D-erythritol 2-phosphate + ADP + H(+). It participates in isoprenoid biosynthesis; isopentenyl diphosphate biosynthesis via DXP pathway; isopentenyl diphosphate from 1-deoxy-D-xylulose 5-phosphate: step 3/6. Catalyzes the phosphorylation of the position 2 hydroxy group of 4-diphosphocytidyl-2C-methyl-D-erythritol. In Microcystis aeruginosa (strain NIES-843 / IAM M-2473), this protein is 4-diphosphocytidyl-2-C-methyl-D-erythritol kinase.